The primary structure comprises 193 residues: Ion-translocating oxidoreductase complex subunit A (193 aa).

The next 6 membrane-spanning stretches (helical) occupy residues 5–25 (LLLF…FLGL), 39–59 (MGMG…AWLI), 63–83 (ILIP…VIAV), 102–122 (LLGI…VALL), 134–154 (ALYG…FAAI), and 171–191 (AIAL…SGLV).

Belongs to the NqrDE/RnfAE family. As to quaternary structure, the complex is composed of six subunits: RsxA, RsxB, RsxC, RsxD, RsxE and RsxG.

It localises to the cell inner membrane. Part of a membrane-bound complex that couples electron transfer with translocation of ions across the membrane. Required to maintain the reduced state of SoxR. In Shigella boydii serotype 18 (strain CDC 3083-94 / BS512), this protein is Ion-translocating oxidoreductase complex subunit A.